Consider the following 363-residue polypeptide: Sorting nexin-21 (363 aa).

A compositionally biased stretch (basic residues) spans 1–11 (MASRLLHRLRH). The segment at 1–99 (MASRLLHRLR…PPPDGQRSSQ (99 aa)) is disordered. Residues 12 to 28 (ALASDGPGEAAAGPEAE) show a composition bias toward low complexity. Residues 46-56 (SRLSGTLSFTS) are compositionally biased toward polar residues. Residues 57–71 (AEDDPDDEDEDDEAG) are compositionally biased toward acidic residues. One can recognise a PX domain in the interval 119–236 (QRLLFEVTSA…DFFVLPELRR (118 aa)). Residues R161, S163, K188, and R202 each contribute to the a 1,2-diacyl-sn-glycero-3-phospho-(1D-myo-inositol-3-phosphate) site.

It belongs to the sorting nexin family. Monomer.

Its subcellular location is the cytoplasmic vesicle membrane. It is found in the early endosome membrane. Functionally, binds to membranes enriched in phosphatidylinositol 3-phosphate (PtdIns(P3)) and phosphatidylinositol 4,5-bisphosphate. May be involved in several stages of intracellular trafficking. This chain is Sorting nexin-21, found in Mus musculus (Mouse).